Here is a 155-residue protein sequence, read N- to C-terminus: Small ribosomal subunit protein uS7 (155 aa).

This sequence belongs to the universal ribosomal protein uS7 family. Part of the 30S ribosomal subunit. Contacts proteins S9 and S11.

In terms of biological role, one of the primary rRNA binding proteins, it binds directly to 16S rRNA where it nucleates assembly of the head domain of the 30S subunit. Is located at the subunit interface close to the decoding center, probably blocks exit of the E-site tRNA. This chain is Small ribosomal subunit protein uS7, found in Chloroherpeton thalassium (strain ATCC 35110 / GB-78).